The primary structure comprises 382 residues: Chaperone protein DnaJ (382 aa).

The J domain maps to 5-70 (DYYETLGVSR…NKRAAYDRYG (66 aa)). A CR-type zinc finger spans residues 140–218 (GKTAQIRVPT…CHGQGRITEE (79 aa)). Positions 153, 156, 170, 173, 192, 195, 206, and 209 each coordinate Zn(2+). CXXCXGXG motif repeat units follow at residues 153 to 160 (CDVCSGSG), 170 to 177 (CGTCQGSG), 192 to 199 (CPTCHGRG), and 206 to 213 (CGKCHGQG).

Belongs to the DnaJ family. As to quaternary structure, homodimer. Zn(2+) serves as cofactor.

It localises to the cytoplasm. Participates actively in the response to hyperosmotic and heat shock by preventing the aggregation of stress-denatured proteins and by disaggregating proteins, also in an autonomous, DnaK-independent fashion. Unfolded proteins bind initially to DnaJ; upon interaction with the DnaJ-bound protein, DnaK hydrolyzes its bound ATP, resulting in the formation of a stable complex. GrpE releases ADP from DnaK; ATP binding to DnaK triggers the release of the substrate protein, thus completing the reaction cycle. Several rounds of ATP-dependent interactions between DnaJ, DnaK and GrpE are required for fully efficient folding. Also involved, together with DnaK and GrpE, in the DNA replication of plasmids through activation of initiation proteins. This Rhizobium rhizogenes (strain K84 / ATCC BAA-868) (Agrobacterium radiobacter) protein is Chaperone protein DnaJ.